A 157-amino-acid chain; its full sequence is MPRRGVVERRPIPPDARYNSVLVQKFINKVMERGKKSLAERIVYQALDLAAEKLKKPQLEIFEQALRNASPSIEVKPKRVGGATYQVPVEVKSDRRYSLAMRWLIMSARARTGKPMVERLAAELIDAYNNTGTTIKRKEDVHRMAEANRAFAHYGRL.

Belongs to the universal ribosomal protein uS7 family. As to quaternary structure, part of the 30S ribosomal subunit. Contacts proteins S9 and S11.

One of the primary rRNA binding proteins, it binds directly to 16S rRNA where it nucleates assembly of the head domain of the 30S subunit. Is located at the subunit interface close to the decoding center, probably blocks exit of the E-site tRNA. The sequence is that of Small ribosomal subunit protein uS7 from Chloroflexus aggregans (strain MD-66 / DSM 9485).